A 918-amino-acid chain; its full sequence is Non-lysosomal glucosylceramidase (918 aa).

A disordered region spans residues 886-918 (HKKSRRPSVTQGTGLSTQPECGPKRSLANLNSE). The segment covering 892 to 904 (PSVTQGTGLSTQP) has biased composition (polar residues). Serine 893 carries the post-translational modification Phosphoserine.

It belongs to the non-lysosomal glucosylceramidase family. Widely expressed at low level. Highly expressed in testis and brain. Ubiquitously expressed in the brain (at protein level). Expressed by Sertoli cells (at protein level).

Its subcellular location is the endoplasmic reticulum membrane. It is found in the golgi apparatus membrane. The enzyme catalyses a beta-D-glucosyl-(1&lt;-&gt;1')-N-acylsphing-4-enine + H2O = an N-acylsphing-4-enine + D-glucose. It carries out the reaction a beta-D-galactosyl-(1&lt;-&gt;1')-N-acylsphing-4-enine + H2O = an N-acylsphing-4-enine + D-galactose. It catalyses the reaction beta-D-glucosyl-(1-&gt;3)-O-lithocholate + H2O = lithocholate + D-glucose. The catalysed reaction is beta-D-glucosyl-(1-&gt;3)-O-chenodeoxycholate + H2O = chenodeoxycholate + D-glucose. The enzyme catalyses a di-trans,poly-cis-dolichyl beta-D-glucosyl phosphate + chenodeoxycholate = beta-D-glucosyl-(1-&gt;3)-O-chenodeoxycholate + a di-trans,poly-cis-dolichyl phosphate + H(+). It carries out the reaction octyl beta-D-glucose + chenodeoxycholate = beta-D-glucosyl-(1-&gt;3)-O-chenodeoxycholate + octan-1-ol. It catalyses the reaction cholesteryl 3-beta-D-glucoside + H2O = cholesterol + D-glucose. The catalysed reaction is a beta-D-glucosyl-(1&lt;-&gt;1')-N-acylsphing-4-enine + cholesterol = cholesteryl 3-beta-D-glucoside + an N-acylsphing-4-enine. The enzyme catalyses beta-D-glucosyl-N-(9Z-octadecenoyl)-sphing-4E-enine + cholesterol = N-(9Z-octadecenoyl)-sphing-4-enine + cholesteryl 3-beta-D-glucoside. It carries out the reaction a beta-D-galactosyl-(1&lt;-&gt;1')-N-acylsphing-4-enine + cholesterol = cholesteryl 3-beta-D-galactoside + an N-acylsphing-4-enine. It catalyses the reaction 1-(beta-D-galactosyl)-N-dodecanoylsphing-4-enine + cholesterol = cholesteryl 3-beta-D-galactoside + N-dodecanoylsphing-4-enine. It functions in the pathway lipid metabolism; sphingolipid metabolism. It participates in steroid metabolism; cholesterol metabolism. With respect to regulation, enzymatic activity is dependent on membrane association and requires the presence of lipids. Inhibited by N-(adamantanemethyloxypentyl)-deoxynojirimycin/AMP-DNM. Inhibited by its product sphingosine/N-acylsphing-4-enine in a feedback loop. Also inhibited by other non-acetylated sphingoid bases and their derivatives but not by sphingosine-1-phosphate and complex sphingolipids. Non-lysosomal glucosylceramidase that catalyzes the hydrolysis of glucosylceramides/GlcCers (such as beta-D-glucosyl-(1&lt;-&gt;1')-N-acylsphing-4-enine) to free glucose and ceramides (such as N-acylsphing-4-enine). GlcCers are membrane glycosphingolipids that have a wide intracellular distribution. They are the main precursors of more complex glycosphingolipids that play a role in cellular growth, differentiation, adhesion, signaling, cytoskeletal dynamics and membrane properties. Also involved in the transglucosylation of cholesterol, transferring glucose from GlcCer, thereby modifying its water solubility and biological properties. Under specific conditions, may catalyze the reverse reaction, transferring glucose from cholesteryl-3-beta-D-glucoside to ceramide (such as N-acylsphing-4-enine). May play a role in the metabolism of bile acids. Able to hydrolyze bile acid 3-O-glucosides as well as to produce bile acid-glucose conjugates thanks to a bile acid glucosyl transferase activity. Catalyzes the hydrolysis of galactosylceramides/GalCers (such as beta-D-galactosyl-(1&lt;-&gt;1')-N-acylsphing-4-enine), as well as galactosyl transfer between GalCers and cholesterol in vitro with lower activity compared with their activity against GlcCers. This is Non-lysosomal glucosylceramidase from Mus musculus (Mouse).